The primary structure comprises 433 residues: Glutamyl-tRNA reductase (433 aa).

Substrate contacts are provided by residues 49-52 (TCNR), Ser-114, 119-121 (EPQ), and Gln-125. Catalysis depends on Cys-50, which acts as the Nucleophile. Position 201-206 (201-206 (GAGETI)) interacts with NADP(+).

The protein belongs to the glutamyl-tRNA reductase family. As to quaternary structure, homodimer.

The catalysed reaction is (S)-4-amino-5-oxopentanoate + tRNA(Glu) + NADP(+) = L-glutamyl-tRNA(Glu) + NADPH + H(+). It functions in the pathway porphyrin-containing compound metabolism; protoporphyrin-IX biosynthesis; 5-aminolevulinate from L-glutamyl-tRNA(Glu): step 1/2. In terms of biological role, catalyzes the NADPH-dependent reduction of glutamyl-tRNA(Glu) to glutamate 1-semialdehyde (GSA). The chain is Glutamyl-tRNA reductase from Histophilus somni (strain 2336) (Haemophilus somnus).